A 509-amino-acid chain; its full sequence is 2,3-bisphosphoglycerate-independent phosphoglycerate mutase (509 aa).

Asp-11 is a Mn(2+) binding site. At Tyr-35 the chain carries Phosphotyrosine. Position 61 (Ser-61) interacts with Mn(2+). Ser-61 acts as the Phosphoserine intermediate in catalysis. Residues His-122, 152–153 (RD), Arg-184, Arg-190, 260–263 (RPDR), and Lys-335 each bind substrate. 5 residues coordinate Mn(2+): Asp-402, His-406, Asp-443, His-444, and His-461.

This sequence belongs to the BPG-independent phosphoglycerate mutase family. As to quaternary structure, monomer. The cofactor is Mn(2+).

The enzyme catalyses (2R)-2-phosphoglycerate = (2R)-3-phosphoglycerate. Its pathway is carbohydrate degradation; glycolysis; pyruvate from D-glyceraldehyde 3-phosphate: step 3/5. Functionally, essential for rapid growth and for sporulation. Catalyzes the interconversion of 2-phosphoglycerate and 3-phosphoglycerate. The chain is 2,3-bisphosphoglycerate-independent phosphoglycerate mutase from Bacillus anthracis.